We begin with the raw amino-acid sequence, 481 residues long: Cobyric acid synthase (481 aa).

In terms of domain architecture, GATase cobBQ-type spans 248 to 435 (NTVIAVPMLP…LHGLFHGGAF (188 aa)). Cys329 (nucleophile) is an active-site residue. His427 is an active-site residue.

It belongs to the CobB/CobQ family. CobQ subfamily.

Its pathway is cofactor biosynthesis; adenosylcobalamin biosynthesis. Its function is as follows. Catalyzes amidations at positions B, D, E, and G on adenosylcobyrinic A,C-diamide. NH(2) groups are provided by glutamine, and one molecule of ATP is hydrogenolyzed for each amidation. The sequence is that of Cobyric acid synthase from Granulibacter bethesdensis (strain ATCC BAA-1260 / CGDNIH1).